A 379-amino-acid polypeptide reads, in one-letter code: UDP-4-amino-4-deoxy-L-arabinose--oxoglutarate aminotransferase (379 aa).

Lys182 bears the N6-(pyridoxal phosphate)lysine mark.

Belongs to the DegT/DnrJ/EryC1 family. ArnB subfamily. Homodimer. Pyridoxal 5'-phosphate is required as a cofactor.

It catalyses the reaction UDP-4-amino-4-deoxy-beta-L-arabinose + 2-oxoglutarate = UDP-beta-L-threo-pentopyranos-4-ulose + L-glutamate. It functions in the pathway nucleotide-sugar biosynthesis; UDP-4-deoxy-4-formamido-beta-L-arabinose biosynthesis; UDP-4-deoxy-4-formamido-beta-L-arabinose from UDP-alpha-D-glucuronate: step 2/3. Its pathway is bacterial outer membrane biogenesis; lipopolysaccharide biosynthesis. In terms of biological role, catalyzes the conversion of UDP-4-keto-arabinose (UDP-Ara4O) to UDP-4-amino-4-deoxy-L-arabinose (UDP-L-Ara4N). The modified arabinose is attached to lipid A and is required for resistance to polymyxin and cationic antimicrobial peptides. In Klebsiella pneumoniae (strain 342), this protein is UDP-4-amino-4-deoxy-L-arabinose--oxoglutarate aminotransferase.